Here is a 733-residue protein sequence, read N- to C-terminus: Polyribonucleotide nucleotidyltransferase (733 aa).

Mg(2+) contacts are provided by aspartate 489 and aspartate 495. Residues 556–615 (PKIDTIKIDVDKIKIVIGKGGETIDKIIAETGVKIDIDEEGNVSIYSSDQDAINRAKEII) enclose the KH domain. Residues 625–693 (DEVYHAKVVR…AKGRVDASMK (69 aa)) form the S1 motif domain. The segment at 691–733 (SMKVLLPRPPKSDKPKHHHDKGHHPHKEYKGHKDHQESPKTEE) is disordered. Basic residues predominate over residues 704 to 723 (KPKHHHDKGHHPHKEYKGHK). Basic and acidic residues predominate over residues 724–733 (DHQESPKTEE).

It belongs to the polyribonucleotide nucleotidyltransferase family. Requires Mg(2+) as cofactor.

Its subcellular location is the cytoplasm. The catalysed reaction is RNA(n+1) + phosphate = RNA(n) + a ribonucleoside 5'-diphosphate. Functionally, involved in mRNA degradation. Catalyzes the phosphorolysis of single-stranded polyribonucleotides processively in the 3'- to 5'-direction. In Streptococcus sanguinis (strain SK36), this protein is Polyribonucleotide nucleotidyltransferase.